The primary structure comprises 203 residues: N-(5'-phosphoribosyl)anthranilate isomerase (203 aa).

This sequence belongs to the TrpF family.

The enzyme catalyses N-(5-phospho-beta-D-ribosyl)anthranilate = 1-(2-carboxyphenylamino)-1-deoxy-D-ribulose 5-phosphate. It participates in amino-acid biosynthesis; L-tryptophan biosynthesis; L-tryptophan from chorismate: step 3/5. The protein is N-(5'-phosphoribosyl)anthranilate isomerase of Thermoanaerobacter sp. (strain X514).